Consider the following 690-residue polypeptide: Elongation factor G (690 aa).

Residues 8-282 (DKVRNIGIMA…AIVNYLPSPL (275 aa)) form the tr-type G domain. GTP contacts are provided by residues 17–24 (AHIDAGKT), 81–85 (DTPGH), and 135–138 (NKMD).

This sequence belongs to the TRAFAC class translation factor GTPase superfamily. Classic translation factor GTPase family. EF-G/EF-2 subfamily.

The protein localises to the cytoplasm. Functionally, catalyzes the GTP-dependent ribosomal translocation step during translation elongation. During this step, the ribosome changes from the pre-translocational (PRE) to the post-translocational (POST) state as the newly formed A-site-bound peptidyl-tRNA and P-site-bound deacylated tRNA move to the P and E sites, respectively. Catalyzes the coordinated movement of the two tRNA molecules, the mRNA and conformational changes in the ribosome. The polypeptide is Elongation factor G (Caldanaerobacter subterraneus subsp. tengcongensis (strain DSM 15242 / JCM 11007 / NBRC 100824 / MB4) (Thermoanaerobacter tengcongensis)).